The primary structure comprises 512 residues: Glutathione-binding protein GsiB (512 aa).

A signal peptide spans 1–26; the sequence is MARAVHRSGLVALGIATALMASCAFA.

The protein belongs to the bacterial solute-binding protein 5 family. In terms of assembly, the complex is composed of two ATP-binding proteins (GsiA), two transmembrane proteins (GsiC and GsiD) and a solute-binding protein (GsiB).

The protein localises to the periplasm. Part of the ABC transporter complex GsiABCD involved in glutathione import. Binds glutathione. The sequence is that of Glutathione-binding protein GsiB from Escherichia coli O1:K1 / APEC.